Reading from the N-terminus, the 237-residue chain is Uridylate kinase (237 aa).

10–13 (KLSG) is a binding site for ATP. Glycine 51 is a UMP binding site. 2 residues coordinate ATP: glycine 52 and arginine 56. UMP is bound by residues aspartate 71 and 133–140 (TGNPCFTT). Residues threonine 160, tyrosine 166, and aspartate 169 each contribute to the ATP site.

This sequence belongs to the UMP kinase family. As to quaternary structure, homohexamer.

It is found in the cytoplasm. The catalysed reaction is UMP + ATP = UDP + ADP. The protein operates within pyrimidine metabolism; CTP biosynthesis via de novo pathway; UDP from UMP (UMPK route): step 1/1. Inhibited by UTP. Catalyzes the reversible phosphorylation of UMP to UDP. The sequence is that of Uridylate kinase from Vesicomyosocius okutanii subsp. Calyptogena okutanii (strain HA).